The following is a 408-amino-acid chain: RUN domain-containing protein 3B (408 aa).

The interval 1–25 (MASRSLGGLSGSRGGGGGGGGKKSL) is disordered. Gly residues predominate over residues 8–22 (GLSGSRGGGGGGGGK). An Omega-N-methylarginine modification is found at Arg-13. Positions 58–190 (DDSSPEFNNF…IDFSFCLKGE (133 aa)) constitute an RUN domain. The interval 213–238 (DSISSDEEELRTFGSSDSESSTPENV) is disordered. Phosphoserine occurs at positions 216 and 217. Over residues 225-236 (FGSSDSESSTPE) the composition is skewed to polar residues. Residues 301–326 (AHKLEKEQLEYIIVELQDQLKSYQSL) adopt a coiled-coil conformation. Positions 337 to 359 (QASLDPSHSQEGDGKQDSLNFIG) are disordered.

It belongs to the RUNDC3 family. Interacts with RAP2A.

The chain is RUN domain-containing protein 3B (Rundc3b) from Mus musculus (Mouse).